Reading from the N-terminus, the 223-residue chain is Dephospho-CoA kinase (223 aa).

One can recognise a DPCK domain in the interval 22-223 (LIGLSGPSCS…LLQEVKKRGF (202 aa)). 30-35 (CSGKNT) provides a ligand contact to ATP.

This sequence belongs to the CoaE family.

The protein resides in the cytoplasm. The enzyme catalyses 3'-dephospho-CoA + ATP = ADP + CoA + H(+). Its pathway is cofactor biosynthesis; coenzyme A biosynthesis; CoA from (R)-pantothenate: step 5/5. Its function is as follows. Catalyzes the phosphorylation of the 3'-hydroxyl group of dephosphocoenzyme A to form coenzyme A. This Treponema denticola (strain ATCC 35405 / DSM 14222 / CIP 103919 / JCM 8153 / KCTC 15104) protein is Dephospho-CoA kinase.